Reading from the N-terminus, the 451-residue chain is PTS system galactitol-specific EIIC component (451 aa).

The PTS EIIC type-2 domain occupies 6 to 435 (MRYILDLGPT…IYLTGIFMTW (430 aa)). 10 consecutive transmembrane segments (helical) span residues 9–29 (ILDLGPTVMLPIVIIIFSKIL), 41–61 (LHIGIGFVGIGLVIGLMLDSI), 92–112 (ASQIALVAIPIAILVNVAMLL), 138–158 (LATGSWMIGMAGVVIHAAFVY), 218–238 (FGPFGEPVTVGFVMGLIIGIL), 305–325 (AVVSASLIFIPLTILIAVCVP), 329–349 (VLPFGDLATIGFFVAMAVAVH), 357–377 (LISGVIIMSITLWIATQTIGL), 392–412 (GMVASMDQGGSPITWLLIQVF), and 415–435 (QNIPGFIIIGAIYLTGIFMTW).

As to quaternary structure, forms a complex with one each of subunit of GatA, GatB and 2 subunits of GatC.

The protein resides in the cell inner membrane. Functionally, the phosphoenolpyruvate-dependent sugar phosphotransferase system (PTS), a major carbohydrate active transport system, catalyzes the phosphorylation of incoming sugar substrates concomitant with their translocation across the cell membrane. The enzyme II complex composed of GatA, GatB and GatC is involved in galactitol transport. In Escherichia coli O157:H7, this protein is PTS system galactitol-specific EIIC component (gatC).